The primary structure comprises 501 residues: MAAASVTSPGSLELLQPGFSKTLLGTRLEAKYLCSACKNILRRPFQAQCGHRYCSFCLTSILSSGPQNCAACVYEGLYEEGISILESSSAFPDNAARREVESLPAVCPNDGCTWKGTLKEYESCHEGLCPFLLTECPACKGLVRLSEKEHHTEQECPKRSLSCQHCRAPCSHVDLEVHYEVCPKFPLTCDGCGKKKIPRETFQDHVRACSKCRVLCRFHTVGCSEMVETENLQDHELQRLREHLALLLSSFLEAQASPGTLNQVGPELLQRCQILEQKIATFENIVCVLNREVERVAVTAEACSRQHRLDQDKIEALSNKVQQLERSIGLKDLAMADLEQKVSELEVSTYDGVFIWKISDFTRKRQEAVAGRTPAIFSPAFYTSRYGYKMCLRVYLNGDGTGRGTHLSLFFVVMKGPNDALLQWPFNQKVTLMLLDHNNREHVIDAFRPDVTSSSFQRPVSDMNIASGCPLFCPVSKMEAKNSYVRDDAIFIKAIVDLTGL.

Ala-2 is modified (N-acetylalanine). Ser-5 carries the phosphoserine modification. Thr-7 is modified (phosphothreonine). Ser-11 is subject to Phosphoserine. Thr-22 is modified (phosphothreonine). Lys-31 participates in a covalent cross-link: Glycyl lysine isopeptide (Lys-Gly) (interchain with G-Cter in ubiquitin). Residues Cys-34 to Val-73 form an RING-type zinc finger. At Thr-117 the chain carries Phosphothreonine; by PKC. TRAF-type zinc fingers lie at residues Cys-124–Glu-180 and Val-177–Gln-233. Residues Glu-283 to Val-293 form an important for interaction with BIRC2 and BIRC3 region. Residues Val-298–Ser-348 are a coiled coil. Lys-320 participates in a covalent cross-link: Glycyl lysine isopeptide (Lys-Gly) (interchain with G-Cter in ubiquitin). In terms of domain architecture, MATH spans Asp-351–Val-496.

This sequence belongs to the TNF receptor-associated factor family. A subfamily. As to quaternary structure, homotrimer. Heterotrimer with TRAF1. Heterotrimer with TRAF3 (via TRAF domain). The domain containing the RING-type and the first TRAF-type zinc finger can also form homodimers (in vitro). Interacts with TNFRSF1B/TNFR2. Interacts with TNFRSF5/CD40. Interacts with TNFRSF4, TNFRSF7/CD27, TNFRSF8/CD30, TNFRSF9/CD137, TNFRSF11A/RANK, TNFRSF13B/TACI, TNFRSF14, TNFRSF16/NGFR, TNFRSF17/BCMA, TNFRSF18/AITR, TNFRSF19/TROY, TNFRSF19L/RELT and EDAR. Stimulation of TNF-alpha receptor TNFRSF1A leads to the formation of two distinct signaling complexes. Plasma membrane-bound complex I is composed of TNFRSF1A, TRADD, RIPK1, TRAF2 and BIRC2/c-IAP1 or BIRC3 which interacts with CHUCK/IKK-alpha, IKBKB/IKK-beta and IKBKG/IKK-gamma promoting cell survival. Subsequently, TRADD, RIPK1 and TRAF2 dissociate from TNFRSF1A and form cytoplasmic complex II with FADD and caspase CASP8 promoting cell apoptosis. Interacts with TRADD. Identified in a complex with TNFRSF1A, RIPK1 and IKBKB/IKK-beta. Interacts with RIPK2. Interacts with BIRC2 and BIRC3 N-terminus; a single BIRC2 or BIRC3 molecule interacts with a heterotrimer formed by TRAF1 and TRAF2, or a TRAF2 homotrimer. Identified in a complex composed of TRAF2, TRAF3, BIRC2 and BIRC3. Interacts with BIRC2; the interaction promotes BIRC2 stability. Interaction with BIRC2 and/or BIRC3 is essential for ubiquitination of IKBKE, degradation of NFKBIA and activation of NF-kappa-B. Within complex I, phosphorylated TRAF2 interacts (via 'Lys-63'-linked polyubiquitin chains) with CHUCK/IKK-alpha, IKBKB/IKK-beta, IKBKG/IKK-gamma TAB2, TAB3 and TAK1 in response to TNF-alpha stimulation. Within complex I, interacts with UXT isoform 1 (via TPQE motif); the interaction prevents the recruitment of FADD and CASP8/caspase 8 to complex I. Forms a complex composed of TNFRSF8/CD30 or TNFRSF1B/TNFR2, and TRAF1, TRAF2 and E3 ligase TRAIP. Within the complex, interacts with TRAIP; the interaction inhibits TRAF2-mediated NF-kappa B activation. Component of a complex composed of TANK and TBK1. Interacts with TRPC4AP. Interacts with MAP3K1/MEKK1, MAP3K5/ASK1 and MAP3K11/MLK3 in response to TNF-alpha stimulation; the interaction leads to JNK activation and interaction with MAP3K5 is inhibited by PRMT1. Component of a complex composed of MAP3K14/NIK BIRC3 and TRAF3; the interaction leads to BIRC2/3-mediated ubiquitination of TRAF3 upon CD40 engagement in a TRAF2-dependent manner. Interacts with MAP3K14/NIK in response to TNF-alpha stimulation; the interaction leads to NF-kappa B activation. Interacts with PEG3; the interaction may promote TRAF2-mediated NF-kappa B activation. Interacts with HIVEP3; the interaction may inhibit TNF-alpha-TRAF2-mediated NF-kappa B and JNK activation. Interacts with TANK/ITRAF; the interaction prevents interaction between TNFRSF1B/TNFR2 and TRAF2. Interacts with deubiquitinating enzyme CYLD; the interaction results in the deubiquitination and inactivation of TRAF2. Interacts with SIAH2; the interaction leads to TRAF2 ubiquitination and degradation. Interacts with E2 conjugating enzyme UBE2N/Ubc13, E3 ligase ITCH and RNF11 in response to TNF-alpha stimulation. Interacts with ubiquitin-editing enzyme TNFAIP3/A20 in response to TNF-alpha stimulation; the interaction promotes TRAF2 dissociation from UBE2N/Ubc13, ITCH, RNF11 and TAX1BP1 and prevents prolonged TRAF-2 ubiquitination. Interacts with TAX1BP1 in response to TNF-alpha stimulation; the interaction promotes TRAF2 dissociation from UBE2N/Ubc13 and TNFAIP3/A20, and prevents prolonged TRAF-2 ubiquitination. Interacts (via C-terminus) with EIF2AK2/PKR (via the kinase catalytic domain). Interacts with deubiquitinating enzyme USP48. Interacts with PTPN2; probably involved in TNF-mediated signaling. Interacts with Toll-like receptor TLR4/3 adapter TICAM1/TRIF; the interaction may promote TICAM1 ubiquitination. Interacts with kinase/endoribonuclease ERN1/IRE1 and DAB2IP in response to ER stress; the interaction requires DAB2IP. Interacts with ERN1/IRE1 and TAOK3 in response to ER stress; the interaction may promote TRAF2 phosphorylation. Interacts (via zinc fingers) with DAB2IP (via C-terminus PER domain) in response to TNF-alpha stimulation. Interacts with CASP8AP2/FLASH. Interacts with NFATC2IP; the interaction may repress IL-4 production in T cells. Interacts with kinase CDK9. Interacts with sphingosine kinase 1 SPHK1. Interacts with kinase TNIK. Interacts with TRAFD1. Interacts with DNA phosphodiesterase TDP2. Interacts with MAVS/IPS1. Interacts with CARD14. Interacts with GPS2. Interacts with XPNPEP3. Interacts with RIPK3. Interacts with RELL2. Interacts with LRRC19. Interacts with GAPDH; promoting TRAF2 ubiquitination. In terms of processing, phosphorylated at several serine residues within the first 128 amino acid residues. Phosphorylated at Thr-117 in response to signaling via TNF and TNFRSF1A. Phosphorylation at Thr-117 is required for 'Lys-63'-linked polyubiquitination, but not for 'Lys-48'-linked polyubiquitination. Phosphorylation at Thr-117 is important for interaction with IKKA and IKKB, activation of IKK and subsequent activation of NF-kappa-B. Undergoes both 'Lys-48'-linked and 'Lys-63'-linked polyubiquitination. Polyubiquitinated via 'Lys-63'-linked ubiquitin in response to TNF signaling; this requires prior phosphorylation at Thr-117. 'Lys-63'-linked polyubiquitination promotes TRAF2-mediated activation of NF-kappa-B. Can be polyubiquitinated at several Lys residues via 'Lys-48'-linked ubiquitin chains in response to TNF signaling, leading to proteasomal degradation. Autoubiquitinated, leading to its subsequent proteasomal degradation. Polyubiquitinated by BIRC2 and SIAH2, leading to its subsequent proteasomal degradation. Not ubiquitinated by BIRC3 or SIAH1. Deubiquitinated by CYLD, a protease that specifically cleaves 'Lys-63'-linked polyubiquitin chains. Ubiquination is inhibited by LRRC19; inhiits proteasomal degradation. Ubiquitinated at Lys-320 by the SCF(FBXL2) complex, leading to its degradation by the proteasome. Ubiquitinated by E3 ubiquitin-protein ligase complex containing FBXO7; leading to repression of NF-kappa-B signaling. Isoform 1 and isoform 2 are expressed in spleen, adipose tissues, skeletal muscles, thymus, testis, heart, lung, brain. Isoform 2 is very weakly expressed in heart, lung and brain.

It is found in the cytoplasm. The enzyme catalyses S-ubiquitinyl-[E2 ubiquitin-conjugating enzyme]-L-cysteine + [acceptor protein]-L-lysine = [E2 ubiquitin-conjugating enzyme]-L-cysteine + N(6)-ubiquitinyl-[acceptor protein]-L-lysine.. It participates in protein modification; protein ubiquitination. Has very low E3 ubiquitin ligase activity in the absence of sphingosine-1-phosphate. E3 ubiquitin ligase activity is strongly activated by cytoplasmic sphingosine-1-phosphate. Functionally, E3 ubiquitin-protein ligase that regulates activation of NF-kappa-B and JNK and plays a central role in the regulation of cell survival and apoptosis. Catalyzes 'Lys-63'-linked ubiquitination of target proteins, such as BIRC3, IKBKE, MLST8, RIPK1 and TICAM1. Is an essential constituent of several E3 ubiquitin-protein ligase complexes, where it promotes the ubiquitination of target proteins by bringing them into contact with other E3 ubiquitin ligases. Regulates BIRC2 and BIRC3 protein levels by inhibiting their autoubiquitination and subsequent degradation; this does not depend on the TRAF2 RING-type zinc finger domain. Plays a role in mediating activation of NF-kappa-B by EIF2AK2/PKR. In complex with BIRC2 or BIRC3, promotes ubiquitination of IKBKE. Acts as a regulator of mTORC1 and mTORC2 assembly by mediating 'Lys-63'-linked ubiquitination of MLST8, thereby inhibiting formation of the mTORC2 complex, while facilitating assembly of the mTORC1 complex. Required for normal antibody isotype switching from IgM to IgG. The sequence is that of TNF receptor-associated factor 2 (Traf2) from Mus musculus (Mouse).